The chain runs to 233 residues: C-type lectin domain family 2 member D6 (233 aa).

The tract at residues 1–45 (MPSSAHLQDSPPLLSRTLTQNEGQTSLRQSSSCGPSATSASESLS) is disordered. Over 1–73 (MPSSAHLQDS…GIILPESPAK (73 aa)) the chain is Cytoplasmic. The span at 16–29 (RTLTQNEGQTSLRQ) shows a compositional bias: polar residues. The segment covering 30–43 (SSSCGPSATSASES) has biased composition (low complexity). A helical; Signal-anchor for type II membrane protein membrane pass occupies residues 74 to 94 (LLCCCAVIVVLSVAVVALSVA). Residues 95-233 (LSVKKTPQIS…KLNSYTSQCQ (139 aa)) lie on the Extracellular side of the membrane. In terms of domain architecture, C-type lectin spans 119 to 230 (VGNKCYYFNE…ICSKLNSYTS (112 aa)). Asparagine 132 is a glycosylation site (N-linked (GlcNAc...) asparagine).

The protein localises to the cell membrane. Its function is as follows. Lectin-type cell surface receptor. This is C-type lectin domain family 2 member D6 (Clec2d6) from Rattus norvegicus (Rat).